Reading from the N-terminus, the 105-residue chain is Small ribosomal subunit protein uS10 (105 aa).

It belongs to the universal ribosomal protein uS10 family. As to quaternary structure, part of the 30S ribosomal subunit.

In terms of biological role, involved in the binding of tRNA to the ribosomes. This Oleidesulfovibrio alaskensis (strain ATCC BAA-1058 / DSM 17464 / G20) (Desulfovibrio alaskensis) protein is Small ribosomal subunit protein uS10.